Consider the following 124-residue polypeptide: Large ribosomal subunit protein eL22 (124 aa).

It belongs to the eukaryotic ribosomal protein eL22 family. In terms of assembly, component of the large ribosomal subunit. Mature ribosomes consist of a small (40S) and a large (60S) subunit. The 40S subunit contains about 32 different proteins and 1 molecule of RNA (18S). The 60S subunit contains 45 different proteins and 3 molecules of RNA (25S, 5.8S and 5S).

It localises to the cytoplasm. Component of the ribosome, a large ribonucleoprotein complex responsible for the synthesis of proteins in the cell. The small ribosomal subunit (SSU) binds messenger RNAs (mRNAs) and translates the encoded message by selecting cognate aminoacyl-transfer RNA (tRNA) molecules. The large subunit (LSU) contains the ribosomal catalytic site termed the peptidyl transferase center (PTC), which catalyzes the formation of peptide bonds, thereby polymerizing the amino acids delivered by tRNAs into a polypeptide chain. The nascent polypeptides leave the ribosome through a tunnel in the LSU and interact with protein factors that function in enzymatic processing, targeting, and the membrane insertion of nascent chains at the exit of the ribosomal tunnel. In Candida albicans (strain SC5314 / ATCC MYA-2876) (Yeast), this protein is Large ribosomal subunit protein eL22.